The sequence spans 332 residues: UPF0194 membrane protein YbhG (332 aa).

Positions 1 to 16 (MMKKTVVIGLAVVVLA) are cleaved as a signal peptide. Positions 108-209 (EEIAQAAAAV…LNLQDSTLIA (102 aa)) form a coiled coil.

The protein belongs to the UPF0194 family.

It is found in the periplasm. The chain is UPF0194 membrane protein YbhG from Shigella dysenteriae serotype 1 (strain Sd197).